The sequence spans 136 residues: Evasin P991 (136 aa).

The first 28 residues, 1–28 (MHSTIVYACLLALAVFVALHGTPLAALA), serve as a signal peptide directing secretion. N-linked (GlcNAc...) asparagine glycans are attached at residues Asn-41, Asn-61, Asn-64, Asn-78, Asn-92, Asn-100, and Asn-122. Disulfide bonds link Cys-55–Cys-77, Cys-73–Cys-114, Cys-90–Cys-119, and Cys-109–Cys-128.

It is found in the secreted. Its function is as follows. Salivary chemokine-binding protein which has chemokine-neutralizing activity and binds to host chemokines CCL2, CCL3, CCL3L1, CCL4, CCL4L1, CCL5, CCL6, CCL7, CCL8, CCL9, CCL11, CCL12, CCL13, CCL14, CCL16, CCL17, CCL18, CCL19, CCL22, CCL23, CCL24 and CCL27. The sequence is that of Evasin P991 from Amblyomma cajennense (Cayenne tick).